We begin with the raw amino-acid sequence, 105 residues long: Large ribosomal subunit protein uL24 (105 aa).

Belongs to the universal ribosomal protein uL24 family. Part of the 50S ribosomal subunit.

Its function is as follows. One of two assembly initiator proteins, it binds directly to the 5'-end of the 23S rRNA, where it nucleates assembly of the 50S subunit. In terms of biological role, one of the proteins that surrounds the polypeptide exit tunnel on the outside of the subunit. In Halorhodospira halophila (strain DSM 244 / SL1) (Ectothiorhodospira halophila (strain DSM 244 / SL1)), this protein is Large ribosomal subunit protein uL24.